Consider the following 268-residue polypeptide: Centromere protein Q (268 aa).

A disordered region spans residues 1-80 (MSGKANASKK…KTWQPLSKST (80 aa)). Phosphoserine occurs at positions 31 and 50. Basic residues predominate over residues 58-72 (TNLKHGKTAASKRKT). Positions 170-206 (ELMTGNIQSLKNKIQILASEVEEEEERVKQMHQINSS) form a coiled coil. Ser249 bears the Phosphoserine mark.

The protein belongs to the CENP-Q/OKP1 family. Component of the CENPA-CAD complex, composed of CENPI, CENPK, CENPL, CENPO, CENPP, CENPQ, CENPR and CENPS. The CENPA-CAD complex interacts with the CENPA-NAC complex, at least composed of CENPA, CENPC, CENPH, CENPM, CENPN, CENPT and CENPU. Phosphorylation at Ser-50 is essential for CENPE recruitment to kinetochores and orderly chromosome congression.

It localises to the nucleus. Its subcellular location is the chromosome. It is found in the centromere. Its function is as follows. Component of the CENPA-CAD (nucleosome distal) complex, a complex recruited to centromeres which is involved in assembly of kinetochore proteins, mitotic progression and chromosome segregation. May be involved in incorporation of newly synthesized CENPA into centromeres via its interaction with the CENPA-NAC complex. Plays an important role in chromosome congression and in the recruitment of CENP-O complex (which comprises CENPO, CENPP, CENPQ and CENPU), CENPE and PLK1 to the kinetochores. This chain is Centromere protein Q (CENPQ), found in Homo sapiens (Human).